We begin with the raw amino-acid sequence, 931 residues long: Bifunctional uridylyltransferase/uridylyl-removing enzyme (931 aa).

Residues 1-383 (MDSVTPNSRP…KTGNSWRRVP (383 aa)) form a uridylyltransferase region. A uridylyl-removing region spans residues 384 to 739 (ESDDFIVDNN…VGFDPARGVT (356 aa)). Residues 499 to 622 (VDEHLIRCIG…VQSVEQMKLL (124 aa)) form the HD domain. ACT domains lie at 740–822 (ELTI…AVAR) and 851–931 (VIEV…QPAA).

The protein belongs to the GlnD family. Mg(2+) serves as cofactor.

The enzyme catalyses [protein-PII]-L-tyrosine + UTP = [protein-PII]-uridylyl-L-tyrosine + diphosphate. It carries out the reaction [protein-PII]-uridylyl-L-tyrosine + H2O = [protein-PII]-L-tyrosine + UMP + H(+). Its activity is regulated as follows. Uridylyltransferase (UTase) activity is inhibited by glutamine, while glutamine activates uridylyl-removing (UR) activity. In terms of biological role, modifies, by uridylylation and deuridylylation, the PII regulatory proteins (GlnB and homologs), in response to the nitrogen status of the cell that GlnD senses through the glutamine level. Under low glutamine levels, catalyzes the conversion of the PII proteins and UTP to PII-UMP and PPi, while under higher glutamine levels, GlnD hydrolyzes PII-UMP to PII and UMP (deuridylylation). Thus, controls uridylylation state and activity of the PII proteins, and plays an important role in the regulation of nitrogen fixation and metabolism. The chain is Bifunctional uridylyltransferase/uridylyl-removing enzyme from Bradyrhizobium sp. (strain BTAi1 / ATCC BAA-1182).